A 610-amino-acid chain; its full sequence is Methionine--tRNA ligase (610 aa).

The 'HIGH' region motif lies at 12 to 22 (PYANGPRHIGH). Positions 144, 147, 157, and 160 each coordinate Zn(2+). The 'KMSKS' region signature appears at 348–352 (KFSSS). Residue serine 351 participates in ATP binding.

This sequence belongs to the class-I aminoacyl-tRNA synthetase family. MetG type 1 subfamily. Monomer. Requires Zn(2+) as cofactor.

Its subcellular location is the cytoplasm. The enzyme catalyses tRNA(Met) + L-methionine + ATP = L-methionyl-tRNA(Met) + AMP + diphosphate. Functionally, is required not only for elongation of protein synthesis but also for the initiation of all mRNA translation through initiator tRNA(fMet) aminoacylation. In Corynebacterium diphtheriae (strain ATCC 700971 / NCTC 13129 / Biotype gravis), this protein is Methionine--tRNA ligase.